Consider the following 688-residue polypeptide: Glycine--tRNA ligase beta subunit (688 aa).

This sequence belongs to the class-II aminoacyl-tRNA synthetase family. Tetramer of two alpha and two beta subunits.

Its subcellular location is the cytoplasm. It catalyses the reaction tRNA(Gly) + glycine + ATP = glycyl-tRNA(Gly) + AMP + diphosphate. The chain is Glycine--tRNA ligase beta subunit from Listeria monocytogenes serovar 1/2a (strain ATCC BAA-679 / EGD-e).